Here is a 329-residue protein sequence, read N- to C-terminus: Beta-ketoacyl-[acyl-carrier-protein] synthase III (329 aa).

Active-site residues include cysteine 123 and histidine 256. The tract at residues 257 to 261 (QANIR) is ACP-binding. Residue asparagine 286 is part of the active site.

The protein belongs to the thiolase-like superfamily. FabH family. In terms of assembly, homodimer.

The protein resides in the cytoplasm. It catalyses the reaction malonyl-[ACP] + acetyl-CoA + H(+) = 3-oxobutanoyl-[ACP] + CO2 + CoA. It participates in lipid metabolism; fatty acid biosynthesis. Its function is as follows. Catalyzes the condensation reaction of fatty acid synthesis by the addition to an acyl acceptor of two carbons from malonyl-ACP. Catalyzes the first condensation reaction which initiates fatty acid synthesis and may therefore play a role in governing the total rate of fatty acid production. Possesses both acetoacetyl-ACP synthase and acetyl transacylase activities. Its substrate specificity determines the biosynthesis of branched-chain and/or straight-chain of fatty acids. This is Beta-ketoacyl-[acyl-carrier-protein] synthase III from Burkholderia orbicola (strain AU 1054).